We begin with the raw amino-acid sequence, 876 residues long: Alanine--tRNA ligase (876 aa).

Zn(2+) is bound by residues His564, His568, Cys666, and His670.

The protein belongs to the class-II aminoacyl-tRNA synthetase family. It depends on Zn(2+) as a cofactor.

The protein localises to the cytoplasm. It carries out the reaction tRNA(Ala) + L-alanine + ATP = L-alanyl-tRNA(Ala) + AMP + diphosphate. Its function is as follows. Catalyzes the attachment of alanine to tRNA(Ala) in a two-step reaction: alanine is first activated by ATP to form Ala-AMP and then transferred to the acceptor end of tRNA(Ala). Also edits incorrectly charged Ser-tRNA(Ala) and Gly-tRNA(Ala) via its editing domain. The protein is Alanine--tRNA ligase of Porphyromonas gingivalis (strain ATCC BAA-308 / W83).